Consider the following 134-residue polypeptide: Citrolysin protein 2 (134 aa).

This Citrobacter freundii protein is Citrolysin protein 2.